Consider the following 116-residue polypeptide: MLDIIKAIEAEQVKTDITEFNVGDTVRVNVRIKEGNKERLQAFEGTVIKRQNGGIRETFTVRRVAYGTGVERTFPVNSPMLESIKVVRRGKVRRSKLYYLRNRVGKAAKVKEALNR.

This sequence belongs to the bacterial ribosomal protein bL19 family.

Functionally, this protein is located at the 30S-50S ribosomal subunit interface and may play a role in the structure and function of the aminoacyl-tRNA binding site. The chain is Large ribosomal subunit protein bL19 from Clostridium novyi (strain NT).